The following is a 239-amino-acid chain: Putative 3-methyladenine DNA glycosylase (239 aa).

This sequence belongs to the DNA glycosylase MPG family.

The polypeptide is Putative 3-methyladenine DNA glycosylase (Pseudomonas aeruginosa (strain ATCC 15692 / DSM 22644 / CIP 104116 / JCM 14847 / LMG 12228 / 1C / PRS 101 / PAO1)).